We begin with the raw amino-acid sequence, 370 residues long: Phosphate-binding protein PstS2 (370 aa).

Residues M1–A22 form the signal peptide. C23 carries N-palmitoyl cysteine lipidation. C23 carries the S-diacylglycerol cysteine lipid modification. Phosphate is bound by residues S54–A56, S84, D102, and S191–T193.

It belongs to the PstS family. The complex is composed of two ATP-binding proteins (PstB), two transmembrane proteins (PstC and PstA) and a solute-binding protein (PstS).

The protein resides in the cell membrane. It is found in the secreted. Functionally, functions in inorganic phosphate uptake, a phosphate-binding protein, although probably not the main uptake protein under phosphate starvation. Part of the ABC transporter complex PstSACB involved in phosphate import. The protein is Phosphate-binding protein PstS2 (pstS2) of Mycobacterium bovis (strain BCG / Pasteur 1173P2).